Here is a 243-residue protein sequence, read N- to C-terminus: tRNA (guanine-N(1)-)-methyltransferase (243 aa).

S-adenosyl-L-methionine-binding positions include glycine 113 and 133–138; that span reads IGDFVL.

It belongs to the RNA methyltransferase TrmD family. As to quaternary structure, homodimer.

It is found in the cytoplasm. It catalyses the reaction guanosine(37) in tRNA + S-adenosyl-L-methionine = N(1)-methylguanosine(37) in tRNA + S-adenosyl-L-homocysteine + H(+). Its function is as follows. Specifically methylates guanosine-37 in various tRNAs. The chain is tRNA (guanine-N(1)-)-methyltransferase from Bacillus velezensis (strain DSM 23117 / BGSC 10A6 / LMG 26770 / FZB42) (Bacillus amyloliquefaciens subsp. plantarum).